A 250-amino-acid chain; its full sequence is 3-deoxy-manno-octulosonate cytidylyltransferase 1 (250 aa).

This sequence belongs to the KdsB family.

It localises to the cytoplasm. It catalyses the reaction 3-deoxy-alpha-D-manno-oct-2-ulosonate + CTP = CMP-3-deoxy-beta-D-manno-octulosonate + diphosphate. It participates in nucleotide-sugar biosynthesis; CMP-3-deoxy-D-manno-octulosonate biosynthesis; CMP-3-deoxy-D-manno-octulosonate from 3-deoxy-D-manno-octulosonate and CTP: step 1/1. Its pathway is bacterial outer membrane biogenesis; lipopolysaccharide biosynthesis. Its function is as follows. Activates KDO (a required 8-carbon sugar) for incorporation into bacterial lipopolysaccharide in Gram-negative bacteria. The polypeptide is 3-deoxy-manno-octulosonate cytidylyltransferase 1 (Actinobacillus pleuropneumoniae serotype 5b (strain L20)).